A 565-amino-acid polypeptide reads, in one-letter code: Atlastin-2 (565 aa).

The Cytoplasmic segment spans residues 1–458 (MVLKKGVKFF…NIFYAARTPA (458 aa)). The 246-residue stretch at 73-318 (DLNIVVVSVA…LVPLLLAPEN (246 aa)) folds into the GB1/RHD3-type G domain. GDP contacts are provided by R86, K87, G88, K89, S90, F91, Q157, R226, and D227. GTP contacts are provided by R86, K87, G88, K89, S90, and F91. S90 is a Mg(2+) binding site. Residues R226 and D227 each coordinate GTP. Residues 238 to 266 (LEGGKQFLEKRLQVKKNQHEELQNVRKHI) adopt a coiled-coil conformation. K252 carries the N6-methyllysine modification. GDP-binding residues include V285 and N288. V285 is a binding site for GTP. The segment at 356–447 (MLQATAEANN…YANFIKHNDG (92 aa)) is 3HB (three-helix bundle) domain. The tract at residues 448 to 456 (KNIFYAART) is linker. A helical membrane pass occupies residues 459–479 (TLFAVMFAMYIISGLTGFIGL). Residues 480 to 481 (NS) are Lumenal-facing. The helical transmembrane segment at 482 to 502 (IAVLCNLVMGLALTFLCTWAY) threads the bilayer. The Cytoplasmic portion of the chain corresponds to 503 to 565 (VKYSGEFREI…VSHHARLKTD (63 aa)). The segment at 529 to 565 (KPLGDNLMEENIRQSVTNSIKAGLTDQVSHHARLKTD) is autoinhibitory domain.

This sequence belongs to the TRAFAC class dynamin-like GTPase superfamily. GB1/RHD3 GTPase family. GB1 subfamily. As to quaternary structure, monomeric and homodimeric. The homodimer, transiently formed by two molecules on opposing membranes, is the active form mediating ER membrane fusion. Interacts with REEP5 and RTN3; these proteins are involved in endoplasmic reticulum tubular network organization. Interacts with ZFYVE27; both proteins are involved in endoplasmic reticulum tubular network organization.

The protein localises to the endoplasmic reticulum membrane. It catalyses the reaction GTP + H2O = GDP + phosphate + H(+). Functionally, atlastin-2 (ATL2) is a membrane-anchored GTPase that mediates the GTP-dependent fusion of endoplasmic reticulum (ER) membranes, maintaining the continuous ER network. It facilitates the formation of three-way junctions where ER tubules intersect. Two atlastin-2 on neighboring ER tubules bind GTP and form loose homodimers through the GB1/RHD3-type G domains and 3HB regions. Upon GTP hydrolysis, the 3HB regions tighten, pulling the membranes together to drive their fusion. After fusion, the homodimer disassembles upon release of inorganic phosphate (Pi). Subsequently, GDP dissociates, resetting the monomers to a conformation ready for a new fusion cycle. In Macaca fascicularis (Crab-eating macaque), this protein is Atlastin-2.